The sequence spans 206 residues: Probable 5-formyltetrahydrofolate cyclo-ligase (206 aa).

ATP-binding positions include 8–12 (KSELR) and R12. Substrate is bound by residues V54, E59, and 146–150 (HGKGY). 143–151 (RCGHGKGYY) provides a ligand contact to ATP. The Mg(2+) site is built by D152 and D188.

Belongs to the 5-formyltetrahydrofolate cyclo-ligase family. Monomer. It depends on Mg(2+) as a cofactor.

It is found in the cytoplasm. It carries out the reaction (6S)-5-formyl-5,6,7,8-tetrahydrofolate + ATP = (6R)-5,10-methenyltetrahydrofolate + ADP + phosphate. Functionally, contributes to tetrahydrofolate metabolism. Helps regulate carbon flow through the folate-dependent one-carbon metabolic network that supplies carbon for the biosynthesis of purines, thymidine and amino acids. Catalyzes the irreversible conversion of 5-formyltetrahydrofolate (5-CHO-H(4)PteGlu) to yield 5,10-methenyltetrahydrofolate. The polypeptide is Probable 5-formyltetrahydrofolate cyclo-ligase (Caenorhabditis elegans).